The primary structure comprises 288 residues: Protoheme IX farnesyltransferase (288 aa).

Helical transmembrane passes span Val16–Asn36, Leu37–Ala57, Ile88–Phe108, Leu111–Leu131, Trp138–Val158, Phe162–Trp182, Ala210–Phe230, Val236–Val256, and Leu265–Phe285.

This sequence belongs to the UbiA prenyltransferase family. Protoheme IX farnesyltransferase subfamily.

Its subcellular location is the cell membrane. It catalyses the reaction heme b + (2E,6E)-farnesyl diphosphate + H2O = Fe(II)-heme o + diphosphate. Its pathway is porphyrin-containing compound metabolism; heme O biosynthesis; heme O from protoheme: step 1/1. Converts heme B (protoheme IX) to heme O by substitution of the vinyl group on carbon 2 of heme B porphyrin ring with a hydroxyethyl farnesyl side group. The sequence is that of Protoheme IX farnesyltransferase from Thermoplasma acidophilum (strain ATCC 25905 / DSM 1728 / JCM 9062 / NBRC 15155 / AMRC-C165).